We begin with the raw amino-acid sequence, 204 residues long: dTTP/UTP pyrophosphatase (204 aa).

Catalysis depends on Asp-76, which acts as the Proton acceptor.

The protein belongs to the Maf family. YhdE subfamily. Requires a divalent metal cation as cofactor.

The protein localises to the cytoplasm. It carries out the reaction dTTP + H2O = dTMP + diphosphate + H(+). It catalyses the reaction UTP + H2O = UMP + diphosphate + H(+). Functionally, nucleoside triphosphate pyrophosphatase that hydrolyzes dTTP and UTP. May have a dual role in cell division arrest and in preventing the incorporation of modified nucleotides into cellular nucleic acids. The protein is dTTP/UTP pyrophosphatase of Salinibacter ruber (strain DSM 13855 / M31).